Consider the following 224-residue polypeptide: Probable C-&gt;U-editing enzyme APOBEC-2 (224 aa).

The disordered stretch occupies residues 1–25 (MAQKEEAAAATEAASQNGEDLENLD). Positions 60 and 98 each coordinate Zn(2+). Residues 64-169 (GRNKTFLCYV…LEIQDALKKL (106 aa)) enclose the CMP/dCMP-type deaminase domain. E100 (proton donor) is an active-site residue. C128 and C131 together coordinate Zn(2+).

This sequence belongs to the cytidine and deoxycytidylate deaminase family. In terms of assembly, homotetramer. Requires Zn(2+) as cofactor.

It catalyses the reaction cytidine(6666) in apoB mRNA + H2O + H(+) = uridine(6666) in apoB mRNA + NH4(+). Probable C to U editing enzyme whose physiological substrate is not yet known. Does not display detectable apoB mRNA editing. Has a low intrinsic cytidine deaminase activity. May play a role in the epigenetic regulation of gene expression through the process of active DNA demethylation. This Pongo pygmaeus (Bornean orangutan) protein is Probable C-&gt;U-editing enzyme APOBEC-2 (APOBEC2).